A 111-amino-acid chain; its full sequence is Large ribosomal subunit protein uL22 (111 aa).

It belongs to the universal ribosomal protein uL22 family. In terms of assembly, part of the 50S ribosomal subunit.

In terms of biological role, this protein binds specifically to 23S rRNA; its binding is stimulated by other ribosomal proteins, e.g. L4, L17, and L20. It is important during the early stages of 50S assembly. It makes multiple contacts with different domains of the 23S rRNA in the assembled 50S subunit and ribosome. Its function is as follows. The globular domain of the protein is located near the polypeptide exit tunnel on the outside of the subunit, while an extended beta-hairpin is found that lines the wall of the exit tunnel in the center of the 70S ribosome. The sequence is that of Large ribosomal subunit protein uL22 from Chlamydia trachomatis serovar L2 (strain ATCC VR-902B / DSM 19102 / 434/Bu).